Here is a 547-residue protein sequence, read N- to C-terminus: Glucose-6-phosphate isomerase (547 aa).

Glu350 (proton donor) is an active-site residue. Catalysis depends on residues His381 and Lys510.

This sequence belongs to the GPI family.

It localises to the cytoplasm. The catalysed reaction is alpha-D-glucose 6-phosphate = beta-D-fructose 6-phosphate. It participates in carbohydrate biosynthesis; gluconeogenesis. The protein operates within carbohydrate degradation; glycolysis; D-glyceraldehyde 3-phosphate and glycerone phosphate from D-glucose: step 2/4. Functionally, catalyzes the reversible isomerization of glucose-6-phosphate to fructose-6-phosphate. The protein is Glucose-6-phosphate isomerase of Mesorhizobium japonicum (strain LMG 29417 / CECT 9101 / MAFF 303099) (Mesorhizobium loti (strain MAFF 303099)).